Consider the following 104-residue polypeptide: Large ribosomal subunit protein uL24 (104 aa).

The protein belongs to the universal ribosomal protein uL24 family. Part of the 50S ribosomal subunit.

One of two assembly initiator proteins, it binds directly to the 5'-end of the 23S rRNA, where it nucleates assembly of the 50S subunit. In terms of biological role, one of the proteins that surrounds the polypeptide exit tunnel on the outside of the subunit. This is Large ribosomal subunit protein uL24 from Methylorubrum populi (strain ATCC BAA-705 / NCIMB 13946 / BJ001) (Methylobacterium populi).